The chain runs to 463 residues: ATP-dependent protease ATPase subunit HslU (463 aa).

ATP is bound by residues V21, 63-68, D276, E341, and R413; that span reads GVGKTE.

This sequence belongs to the ClpX chaperone family. HslU subfamily. In terms of assembly, a double ring-shaped homohexamer of HslV is capped on each side by a ring-shaped HslU homohexamer. The assembly of the HslU/HslV complex is dependent on binding of ATP.

It localises to the cytoplasm. Functionally, ATPase subunit of a proteasome-like degradation complex; this subunit has chaperone activity. The binding of ATP and its subsequent hydrolysis by HslU are essential for unfolding of protein substrates subsequently hydrolyzed by HslV. HslU recognizes the N-terminal part of its protein substrates and unfolds these before they are guided to HslV for hydrolysis. This chain is ATP-dependent protease ATPase subunit HslU, found in Thermotoga neapolitana (strain ATCC 49049 / DSM 4359 / NBRC 107923 / NS-E).